The primary structure comprises 255 residues: Adenosine 5'-phosphosulfate reductase (255 aa).

The segment at 1 to 39 is disordered; it reads MMTAEVRTPEQGGGPLTTEPRAPRSAPGHADASAPAFGP. Residues Cys-137, Cys-138, Cys-220, and Cys-223 each coordinate [4Fe-4S] cluster. The active-site Nucleophile; cysteine thiosulfonate intermediate is the Cys-246.

The protein belongs to the PAPS reductase family. CysH subfamily. It depends on [4Fe-4S] cluster as a cofactor.

The protein localises to the cytoplasm. It carries out the reaction [thioredoxin]-disulfide + sulfite + AMP + 2 H(+) = adenosine 5'-phosphosulfate + [thioredoxin]-dithiol. It participates in sulfur metabolism; hydrogen sulfide biosynthesis; sulfite from sulfate. Its function is as follows. Catalyzes the formation of sulfite from adenosine 5'-phosphosulfate (APS) using thioredoxin as an electron donor. The protein is Adenosine 5'-phosphosulfate reductase of Deinococcus radiodurans (strain ATCC 13939 / DSM 20539 / JCM 16871 / CCUG 27074 / LMG 4051 / NBRC 15346 / NCIMB 9279 / VKM B-1422 / R1).